The chain runs to 127 residues: Holo-[acyl-carrier-protein] synthase (127 aa).

Mg(2+) contacts are provided by aspartate 9 and glutamate 58.

It belongs to the P-Pant transferase superfamily. AcpS family. The cofactor is Mg(2+).

The protein localises to the cytoplasm. The enzyme catalyses apo-[ACP] + CoA = holo-[ACP] + adenosine 3',5'-bisphosphate + H(+). Functionally, transfers the 4'-phosphopantetheine moiety from coenzyme A to a Ser of acyl-carrier-protein. The polypeptide is Holo-[acyl-carrier-protein] synthase (Shewanella baltica (strain OS155 / ATCC BAA-1091)).